The following is an 837-amino-acid chain: Espin (837 aa).

ANK repeat units lie at residues 1–31 (MALEQAMQAARRGDLDVLRSLHAAGLLGPSL), 35–66 (LDALPVHHAARSGKLHCLRYLVEEVALPAVSR), 69–99 (NGATPAHDAAATGYLSCLQWLLTQGGCRVQE), 103–132 (SGATVLHLAARFGHPDVVNWLLYQGGANSA), 137–167 (TGALPIHYAAAKGDLPSMKLLVGHYPEGVNA), 171–201 (NGATPLYLACQEGHLEVTKYLVQECSADPHL), 205–235 (DGMTPLHAAAQMGHNPVLVWLVSFADVSFEQ), 238–267 (DGATAMHFAASRGHTKVLSWLLLHGAEISQ), and 270–299 (WGGTPLHDAAENGELECCQILAVNGAGLDV). Serine 337 and serine 341 each carry phosphoserine. The span at 339 to 348 (DPSMDLEAKQ) shows a compositional bias: basic and acidic residues. Disordered stretches follow at residues 339–459 (DPSM…VGLH), 477–712 (DSLK…PATL), 745–767 (KLQQKMQEEEEQRRKEEEEEARL), and 785–816 (EREQKRKEEERQKLEEIQRAKEQSEKLRTLGY). The segment covering 351–364 (SGMSSPNTTMSVQP) has biased composition (polar residues). Positions 376–395 (LSNYDSCSSSHSSSKGQRST) are enriched in low complexity. 2 positions are modified to phosphoserine: serine 400 and serine 401. Residues 423-455 (SLPPPPPPSFPPPPPPGTQLPPPPPGYPAPNPP) show a composition bias toward pro residues. Serine 497, serine 504, and serine 531 each carry phosphoserine. A compositionally biased stretch (pro residues) spans 581 to 604 (LPPPPPPPPLPEALSSPPPAPPLP). Residues 617 to 626 (SSSSTGSTKS) show a composition bias toward low complexity. 2 stretches are compositionally biased toward polar residues: residues 627–636 (FNMMSPTGDN) and 651–662 (PTPQSKGLTTVF). The residue at position 631 (serine 631) is a Phosphoserine. The region spanning 635-652 (DNSELLAEIKAGKSLKPT) is the WH2 domain. Residues 663–673 (SGSGQPASQPE) are compositionally biased toward low complexity. Residues serine 670, serine 674, and serine 680 each carry the phosphoserine modification. Residues 738-814 (KRQVMVRKLQ…KEQSEKLRTL (77 aa)) are a coiled coil.

As to quaternary structure, monomer. Interacts with PFN2. Binds F-actin in a Ca(2+)-resistant fashion. Interacts (via N-terminal) with BAIAP2 (via SH3-domain). Interacts with MYO3A (via C-terminus). Interacts with MYO3B (via C-terminus). Expressed at high concentration in the microvillar parallel actin bundle (PAB) of hair cells stereocilia in the cochlea and vestibular system. Detected also at high levels of a number of other sensory cell types, including taste receptor cells, solitary chemoreceptor cells, vomeronasal sensory neurons and Merkel cells. Isoform 1 is detected in testis. Isoforms 2 is detected in small intestine and kidney (at protein level). Isoforms 3, 4, 6 and 8 are expressed in Purkinje cells dendritic spines.

Its subcellular location is the cytoplasm. It localises to the cytoskeleton. The protein resides in the cell projection. It is found in the stereocilium. The protein localises to the microvillus. Its subcellular location is the cell junction. It localises to the dendritic spine. In terms of biological role, multifunctional actin-bundling protein. Plays a major role in regulating the organization, dimension, dynamics and signaling capacities of the actin filament-rich microvilli in the mechanosensory and chemosensory cells. Required for the assembly and stabilization of the stereociliary parallel actin bundles. Plays a crucial role in the formation and maintenance of inner ear hair cell stereocilia. Involved in the elongation of actin in stereocilia. In extrastriolar hair cells, required for targeting MYO3B to stereocilia tips, and for regulation of stereocilia diameter and staircase formation. This chain is Espin (Espn), found in Rattus norvegicus (Rat).